Reading from the N-terminus, the 62-residue chain is DNA-directed RNA polymerase subunit Rpo10 (62 aa).

Residues cysteine 6, cysteine 9, cysteine 43, and cysteine 44 each coordinate Zn(2+).

Belongs to the archaeal Rpo10/eukaryotic RPB10 RNA polymerase subunit family. In terms of assembly, part of the RNA polymerase complex. It depends on Zn(2+) as a cofactor.

It localises to the cytoplasm. It carries out the reaction RNA(n) + a ribonucleoside 5'-triphosphate = RNA(n+1) + diphosphate. Its function is as follows. DNA-dependent RNA polymerase (RNAP) catalyzes the transcription of DNA into RNA using the four ribonucleoside triphosphates as substrates. This chain is DNA-directed RNA polymerase subunit Rpo10, found in Methanosarcina barkeri (strain Fusaro / DSM 804).